The primary structure comprises 404 residues: Imidazolonepropionase (404 aa).

Fe(3+) is bound by residues His-70 and His-72. Residues His-70 and His-72 each coordinate Zn(2+). Residues Arg-79, Tyr-142, and His-174 each contribute to the 4-imidazolone-5-propanoate site. Tyr-142 contacts N-formimidoyl-L-glutamate. His-234 provides a ligand contact to Fe(3+). His-234 contributes to the Zn(2+) binding site. Glu-237 lines the 4-imidazolone-5-propanoate pocket. Asp-308 is a Fe(3+) binding site. Asp-308 is a Zn(2+) binding site.

This sequence belongs to the metallo-dependent hydrolases superfamily. HutI family. The cofactor is Zn(2+). Fe(3+) serves as cofactor.

Its subcellular location is the cytoplasm. It catalyses the reaction 4-imidazolone-5-propanoate + H2O = N-formimidoyl-L-glutamate. It functions in the pathway amino-acid degradation; L-histidine degradation into L-glutamate; N-formimidoyl-L-glutamate from L-histidine: step 3/3. Catalyzes the hydrolytic cleavage of the carbon-nitrogen bond in imidazolone-5-propanoate to yield N-formimidoyl-L-glutamate. It is the third step in the universal histidine degradation pathway. This Thermoplasma volcanium (strain ATCC 51530 / DSM 4299 / JCM 9571 / NBRC 15438 / GSS1) protein is Imidazolonepropionase.